Consider the following 725-residue polypeptide: Probable alpha-galactosidase G (725 aa).

N-linked (GlcNAc...) asparagine glycosylation is present at Asn-407. The active-site Nucleophile is Asp-484. A glycan (N-linked (GlcNAc...) asparagine) is linked at Asn-490. Residue Asp-546 is the Proton donor of the active site. Asn-672 carries N-linked (GlcNAc...) asparagine glycosylation.

This sequence belongs to the glycosyl hydrolase 36 family. Homotetramer. It depends on Mg(2+) as a cofactor. NAD(+) is required as a cofactor.

Its subcellular location is the secreted. It catalyses the reaction Hydrolysis of terminal, non-reducing alpha-D-galactose residues in alpha-D-galactosides, including galactose oligosaccharides, galactomannans and galactolipids.. Functionally, hydrolyzes a variety of simple alpha-D-galactoside as well as more complex molecules such as oligosaccharides and polysaccharides. The chain is Probable alpha-galactosidase G (aglG) from Aspergillus terreus (strain NIH 2624 / FGSC A1156).